Reading from the N-terminus, the 400-residue chain is Acetate kinase (400 aa).

Residue Asn8 participates in Mg(2+) binding. Lys15 contacts ATP. Arg89 contributes to the substrate binding site. Asp146 functions as the Proton donor/acceptor in the catalytic mechanism. ATP is bound by residues 206–210, 283–285, and 331–335; these read HVGNG, DMR, and GMGEN. Glu383 contacts Mg(2+).

It belongs to the acetokinase family. Homodimer. Mg(2+) is required as a cofactor. The cofactor is Mn(2+).

Its subcellular location is the cytoplasm. The enzyme catalyses acetate + ATP = acetyl phosphate + ADP. The protein operates within metabolic intermediate biosynthesis; acetyl-CoA biosynthesis; acetyl-CoA from acetate: step 1/2. Its function is as follows. Catalyzes the formation of acetyl phosphate from acetate and ATP. Can also catalyze the reverse reaction. This chain is Acetate kinase, found in Streptococcus equi subsp. zooepidemicus (strain MGCS10565).